Here is a 317-residue protein sequence, read N- to C-terminus: Olfactory receptor 2F1 (317 aa).

At 1–24 (MGTDNQTWVSEFILLGLSSDWDTR) the chain is on the extracellular side. N-linked (GlcNAc...) asparagine glycosylation is present at asparagine 5. A helical transmembrane segment spans residues 25–48 (VSLFVLFLVMYVVTVLGNCLIVLL). Residues 49 to 57 (IRLDSRLHT) lie on the Cytoplasmic side of the membrane. The chain crosses the membrane as a helical span at residues 58–79 (PMYFFLTNLSLVDVSYATSVVP). The Extracellular segment spans residues 80–100 (QLLAHFLAEHKAIPFQSCAAQ). Cysteine 97 and cysteine 189 are joined by a disulfide. Residues 101-120 (LFFSLALGGIEFVLLAVMAY) traverse the membrane as a helical segment. Residues 121–139 (DRYVAVCDALRYSAIMHGG) lie on the Cytoplasmic side of the membrane. Residues 140–160 (LCARLAITSWVSGFISSPVQT) form a helical membrane-spanning segment. Residues 161–200 (AITFQLPMCRNKFIDHISCELLAVVRLACVDTSSNEVTIM) are Extracellular-facing. The helical transmembrane segment at 201-222 (VSSIVLLMTPFCLVLLSYIQII) threads the bilayer. Over 223 to 236 (STILKIQSREGRKK) the chain is Cytoplasmic. The chain crosses the membrane as a helical span at residues 237–261 (AFHTCASHLTVVALCYGVAIFTYIQ). Residues 262–272 (PHSSPSVLQEK) lie on the Extracellular side of the membrane. A helical membrane pass occupies residues 273–292 (LFSVFYAILTPMLNPMIYSL). Residues 293 to 317 (RNKEVKGAWQKLLWKFSGLTSKLAT) are Cytoplasmic-facing.

This sequence belongs to the G-protein coupled receptor 1 family.

It is found in the cell membrane. Functionally, odorant receptor. This Homo sapiens (Human) protein is Olfactory receptor 2F1 (OR2F1).